Reading from the N-terminus, the 150-residue chain is Large ribosomal subunit protein bL9 (150 aa).

This sequence belongs to the bacterial ribosomal protein bL9 family.

Its function is as follows. Binds to the 23S rRNA. The protein is Large ribosomal subunit protein bL9 of Baumannia cicadellinicola subsp. Homalodisca coagulata.